Here is a 283-residue protein sequence, read N- to C-terminus: Probable cytochrome c oxidase subunit 3 (283 aa).

Helical transmembrane passes span 26–46 (PWPV…VSFM), 51–71 (FNIY…YSWW), 94–114 (IGMA…FASF), 179–199 (CVTA…MQAY), 217–237 (FYLA…FLII), and 261–281 (AWYW…VYIF).

The protein belongs to the cytochrome c oxidase subunit 3 family.

It is found in the cell membrane. It catalyses the reaction 4 Fe(II)-[cytochrome c] + O2 + 8 H(+)(in) = 4 Fe(III)-[cytochrome c] + 2 H2O + 4 H(+)(out). This is Probable cytochrome c oxidase subunit 3 (ctaE) from Rickettsia conorii (strain ATCC VR-613 / Malish 7).